A 312-amino-acid polypeptide reads, in one-letter code: Undecaprenyl-diphosphatase (312 aa).

The next 7 helical transmembrane spans lie at 74-94 (GVAF…WYFW), 122-142 (VSIG…KVFI), 154-174 (VAIA…ERIG), 183-203 (LDIR…IPGV), 226-246 (FSFL…LKTL), 254-274 (VGLV…YIAI), and 288-308 (IFIW…ISGV).

This sequence belongs to the UppP family.

It is found in the cell inner membrane. It carries out the reaction di-trans,octa-cis-undecaprenyl diphosphate + H2O = di-trans,octa-cis-undecaprenyl phosphate + phosphate + H(+). Functionally, catalyzes the dephosphorylation of undecaprenyl diphosphate (UPP). Confers resistance to bacitracin. The polypeptide is Undecaprenyl-diphosphatase (Trichodesmium erythraeum (strain IMS101)).